The primary structure comprises 313 residues: tRNA-cytidine(32) 2-sulfurtransferase (313 aa).

The short motif at 60–65 is the PP-loop motif element; the sequence is SGGKDS. Residues C135, C138, and C226 each coordinate [4Fe-4S] cluster.

It belongs to the TtcA family. Homodimer. Requires Mg(2+) as cofactor. [4Fe-4S] cluster serves as cofactor.

Its subcellular location is the cytoplasm. The catalysed reaction is cytidine(32) in tRNA + S-sulfanyl-L-cysteinyl-[cysteine desulfurase] + AH2 + ATP = 2-thiocytidine(32) in tRNA + L-cysteinyl-[cysteine desulfurase] + A + AMP + diphosphate + H(+). Its pathway is tRNA modification. Its function is as follows. Catalyzes the ATP-dependent 2-thiolation of cytidine in position 32 of tRNA, to form 2-thiocytidine (s(2)C32). The sulfur atoms are provided by the cysteine/cysteine desulfurase (IscS) system. This chain is tRNA-cytidine(32) 2-sulfurtransferase, found in Delftia acidovorans (strain DSM 14801 / SPH-1).